Reading from the N-terminus, the 570-residue chain is CDKN2A-interacting protein (570 aa).

Position 2 is an N-acetylalanine (Ala2). The region spanning 19 to 126 (VETLRCEGET…KVKKRGISSS (108 aa)) is the XRN2-binding (XTBD) domain. Positions 122 to 345 (GISSSNEGVE…TSLLMPKSSS (224 aa)) are disordered. At Ser124 the chain carries Phosphoserine. Positions 147–162 (VERDHGKKSAKTDRSA) are enriched in basic and acidic residues. Positions 167-183 (SSGSKGSSTKSESSGTS) are enriched in low complexity. A Glycyl lysine isopeptide (Lys-Gly) (interchain with G-Cter in SUMO1) cross-link involves residue Lys176. The span at 184–198 (ARSNSGVSHQNSSTS) shows a compositional bias: polar residues. The segment covering 203–221 (SVCSQSSSNSSQVTSAGSG) has biased composition (low complexity). Positions 224–233 (SEPEAPDKHG) are enriched in basic and acidic residues. The residue at position 234 (Ser234) is a Phosphoserine. Low complexity-rich tracts occupy residues 234 to 248 (SASFVSSLLKSSLNS) and 271 to 301 (SSVSVSQSSSEIEVPLLGSSGSSEVELPLLS). Polar residues predominate over residues 302-317 (CKSSSETASSGLTTKA). Over residues 318 to 345 (SSEANISSSVSKNSSSSGTSLLMPKSSS) the composition is skewed to low complexity. A Phosphoserine modification is found at Ser378. The interval 383-407 (SQLASKSSSQSSTSQLPSKSTSQSS) is disordered. In terms of domain architecture, DRBM spans 452-527 (NHGELLNAAI…SREALKLFLK (76 aa)).

Belongs to the CARF family. As to quaternary structure, interacts with CDKN2A/p14ARF, p53/TP53 and MDM2. Interacts with CHEK2 and MAPK3. Interacts with XRN2. Post-translationally, may be ubiquitinated.

It localises to the nucleus. Its subcellular location is the nucleoplasm. Regulates DNA damage response and cell proliferation in a dose-dependent manner through a number of signaling pathways involved in cell proliferation, apoptosis and senescence. The sequence is that of CDKN2A-interacting protein (Cdkn2aip) from Rattus norvegicus (Rat).